The primary structure comprises 250 residues: Large ribosomal subunit protein uL4 (250 aa).

Disordered stretches follow at residues 1-20 (MQVT…DLPR) and 51-101 (YAGL…HGLD). The segment covering 92–101 (PKAEKDHGLD) has biased composition (basic and acidic residues).

This sequence belongs to the universal ribosomal protein uL4 family. In terms of assembly, part of the 50S ribosomal subunit.

Its function is as follows. One of the primary rRNA binding proteins, this protein initially binds near the 5'-end of the 23S rRNA. It is important during the early stages of 50S assembly. It makes multiple contacts with different domains of the 23S rRNA in the assembled 50S subunit and ribosome. Forms part of the polypeptide exit tunnel. The chain is Large ribosomal subunit protein uL4 from Halobacterium salinarum (strain ATCC 29341 / DSM 671 / R1).